The primary structure comprises 362 residues: MAQIFNFSSGPAMLPAEVLKQAQQELRDWNGLGTSVMEVSHRGKEFIQVAEEAEKDFRDLLNVPSNYKVLFCHGGGRGQFAAVPLNILGDKTTADYVDAGYWAASAIKEAKKYCTPNVFDAKVTVDGLRAVKPMREWQLSDNAAYMHYCPNETIDGIAIDETPDFGKDVVVAADFSSTILSRPIDVSRYGVIYAGAQKNIGPAGLTIVIVREDLLGKANIACPSILDYSILNDNDSMFNTPPTFAWYLSGLVFKWLKANGGVAAMDKINQQKAELLYGVIDNSDFYRNDVAKANRSRMNVPFQLADSALDKLFLEESFAAGLHALKGHRVVGGMRASIYNAMPLEGVKALTDFMVEFERRHG.

L-glutamate-binding residues include serine 9 and arginine 42. Pyridoxal 5'-phosphate contacts are provided by residues 76 to 77, tryptophan 102, threonine 153, aspartate 174, and glutamine 197; that span reads GR. Lysine 198 is modified (N6-(pyridoxal phosphate)lysine). 239-240 contacts pyridoxal 5'-phosphate; sequence NT.

The protein belongs to the class-V pyridoxal-phosphate-dependent aminotransferase family. SerC subfamily. In terms of assembly, homodimer. It depends on pyridoxal 5'-phosphate as a cofactor.

The protein resides in the cytoplasm. The enzyme catalyses O-phospho-L-serine + 2-oxoglutarate = 3-phosphooxypyruvate + L-glutamate. It catalyses the reaction 4-(phosphooxy)-L-threonine + 2-oxoglutarate = (R)-3-hydroxy-2-oxo-4-phosphooxybutanoate + L-glutamate. The protein operates within amino-acid biosynthesis; L-serine biosynthesis; L-serine from 3-phospho-D-glycerate: step 2/3. Its pathway is cofactor biosynthesis; pyridoxine 5'-phosphate biosynthesis; pyridoxine 5'-phosphate from D-erythrose 4-phosphate: step 3/5. Its function is as follows. Catalyzes the reversible conversion of 3-phosphohydroxypyruvate to phosphoserine and of 3-hydroxy-2-oxo-4-phosphonooxybutanoate to phosphohydroxythreonine. This is Phosphoserine aminotransferase from Escherichia coli O7:K1 (strain IAI39 / ExPEC).